The chain runs to 42 residues: Photosystem I reaction center subunit IX (42 aa).

Residues 7-27 (YLSTAPVLAAVWFGFLAGLLI) form a helical membrane-spanning segment.

It belongs to the PsaJ family.

The protein localises to the plastid. The protein resides in the chloroplast thylakoid membrane. May help in the organization of the PsaE and PsaF subunits. This chain is Photosystem I reaction center subunit IX, found in Nephroselmis olivacea (Green alga).